The sequence spans 104 residues: Protein KleF (104 aa).

The protein is Protein KleF (kleF) of Escherichia coli.